A 663-amino-acid chain; its full sequence is DNA topoisomerase 4 subunit B (663 aa).

Residues Y7, N47, D74, 114–120 (GLHGVGA), and K341 each bind ATP. The disordered stretch occupies residues 386-416 (REAARKAREDARSGKKNKRKDTLLSGKLTPA). A compositionally biased stretch (basic and acidic residues) spans 387-398 (EAARKAREDARS). In terms of domain architecture, Toprim spans 424–538 (NELYLVEGDS…AGRVFIALPP (115 aa)). Mg(2+) contacts are provided by E430, D503, and D505.

Belongs to the type II topoisomerase family. ParE type 2 subfamily. In terms of assembly, heterotetramer composed of ParC and ParE. Requires Mg(2+) as cofactor. Mn(2+) is required as a cofactor. The cofactor is Ca(2+).

It catalyses the reaction ATP-dependent breakage, passage and rejoining of double-stranded DNA.. Topoisomerase IV is essential for chromosome segregation. It relaxes supercoiled DNA. Performs the decatenation events required during the replication of a circular DNA molecule. The sequence is that of DNA topoisomerase 4 subunit B from Staphylococcus aureus (strain Mu50 / ATCC 700699).